The primary structure comprises 46 residues: uncharacterized protein (46 aa).

Its subcellular location is the plastid. It is found in the chloroplast. This is an uncharacterized protein from Trieres chinensis (Marine centric diatom).